The primary structure comprises 205 residues: Deoxyuridine 5'-triphosphate nucleotidohydrolase (205 aa).

Serine 54 carries the post-translational modification Phosphoserine. Substrate contacts are provided by residues 126-128 (RSG), 140-143 (GVID), glycine 151, and 199-200 (FG).

Belongs to the dUTPase family. As to quaternary structure, homotrimer. Mg(2+) is required as a cofactor. Expressed in all tissues examined. Higher levels in heart and kidney.

It is found in the cytoplasm. The protein localises to the nucleus. The catalysed reaction is dUTP + H2O = dUMP + diphosphate + H(+). It functions in the pathway pyrimidine metabolism; dUMP biosynthesis; dUMP from dCTP (dUTP route): step 2/2. In terms of biological role, catalyzes the cleavage of 2'-deoxyuridine 5'-triphosphate (dUTP) into 2'-deoxyuridine 5'-monophosphate (dUMP) and inorganic pyrophosphate and through its action efficiently prevents uracil misincorporation into DNA and at the same time provides dUMP, the substrate for de novo thymidylate biosynthesis. Inhibits peroxisome proliferator-activated receptor (PPAR) activity by binding of its N-terminal to PPAR, preventing the latter's dimerization with retinoid X receptor. Essential for embryonic development. This is Deoxyuridine 5'-triphosphate nucleotidohydrolase (Dut) from Rattus norvegicus (Rat).